A 316-amino-acid polypeptide reads, in one-letter code: Endochitinase 2 (316 aa).

A signal peptide spans 1–18; that stretch reads EFTTLFLLFSVLLLSASA. The region spanning 19–60 is the Chitin-binding type-1 domain; the sequence is EQCGSQAGGALCASGLCCSKFGWCGNTNDYCGPGNCQSQCPG. Disulfide bonds link Cys21-Cys36, Cys30-Cys42, Cys35-Cys49, Cys54-Cys58, Cys87-Cys150, Cys162-Cys170, and Cys269-Cys301. Glu132 (proton donor) is an active-site residue. Positions 310-316 are cleaved as a propeptide — removed in mature form, vacuolar targeting; that stretch reads GLLVDTV.

It belongs to the glycosyl hydrolase 19 family. Chitinase class I subfamily.

Its subcellular location is the vacuole. It catalyses the reaction Random endo-hydrolysis of N-acetyl-beta-D-glucosaminide (1-&gt;4)-beta-linkages in chitin and chitodextrins.. Functionally, defense against chitin-containing fungal pathogens. The sequence is that of Endochitinase 2 (CHTB2) from Solanum tuberosum (Potato).